Consider the following 645-residue polypeptide: ATP-dependent DNA helicase Rep (645 aa).

The region spanning 1–280 (MSLNFSQKNA…IKMEHNYRSS (280 aa)) is the UvrD-like helicase ATP-binding domain. Residues 22 to 29 (AGAGSGKT) and Arg278 each bind ATP. The UvrD-like helicase C-terminal domain maps to 281–562 (GRILKAANSL…QLMTLHASKG (282 aa)).

Belongs to the helicase family. UvrD subfamily. Homodimer.

The catalysed reaction is Couples ATP hydrolysis with the unwinding of duplex DNA by translocating in the 3'-5' direction.. The enzyme catalyses ATP + H2O = ADP + phosphate + H(+). In terms of biological role, rep helicase is a single-stranded DNA-dependent ATPase involved in DNA replication; it can initiate unwinding at a nick in the DNA. It binds to the single-stranded DNA and acts in a progressive fashion along the DNA in the 3' to 5' direction. The chain is ATP-dependent DNA helicase Rep from Buchnera aphidicola subsp. Acyrthosiphon pisum (strain APS) (Acyrthosiphon pisum symbiotic bacterium).